The following is a 347-amino-acid chain: Selenide, water dikinase (347 aa).

C17 is an active-site residue. ATP contacts are provided by residues K20 and 48-50 (TRD). Residue D51 coordinates Mg(2+). ATP-binding positions include D68, D91, and 139 to 141 (GHS). D91 provides a ligand contact to Mg(2+). Mg(2+) is bound at residue D227.

This sequence belongs to the selenophosphate synthase 1 family. Class I subfamily. Homodimer. Requires Mg(2+) as cofactor.

It catalyses the reaction hydrogenselenide + ATP + H2O = selenophosphate + AMP + phosphate + 2 H(+). In terms of biological role, synthesizes selenophosphate from selenide and ATP. The chain is Selenide, water dikinase from Cronobacter sakazakii (strain ATCC BAA-894) (Enterobacter sakazakii).